We begin with the raw amino-acid sequence, 365 residues long: Magnesium-chelatase subunit ChlI (365 aa).

Residue 54 to 61 (GDRGTGKS) participates in ATP binding.

Belongs to the Mg-chelatase subunits D/I family.

The protein localises to the plastid. It is found in the chloroplast. It catalyses the reaction protoporphyrin IX + Mg(2+) + ATP + H2O = Mg-protoporphyrin IX + ADP + phosphate + 3 H(+). It participates in porphyrin-containing compound metabolism; chlorophyll biosynthesis. Its function is as follows. Involved in chlorophyll biosynthesis; introduces a magnesium ion into protoporphyrin IX to yield Mg-protoporphyrin IX. This chain is Magnesium-chelatase subunit ChlI (chlI), found in Bigelowiella natans (Pedinomonas minutissima).